A 125-amino-acid polypeptide reads, in one-letter code: Large ribosomal subunit protein eL31 (125 aa).

At Met1 the chain carries N-acetylmethionine. Residue Ser15 is modified to Phosphoserine. N6-succinyllysine is present on residues Lys55 and Lys70. The residue at position 75 (Lys75) is an N6-acetyllysine; alternate. Position 75 is an N6-succinyllysine; alternate (Lys75). A Phosphoserine modification is found at Ser98.

This sequence belongs to the eukaryotic ribosomal protein eL31 family. In terms of assembly, component of the large ribosomal subunit.

The protein resides in the cytoplasm. Component of the large ribosomal subunit. The ribosome is a large ribonucleoprotein complex responsible for the synthesis of proteins in the cell. The sequence is that of Large ribosomal subunit protein eL31 (RPL31) from Pongo abelii (Sumatran orangutan).